A 789-amino-acid chain; its full sequence is DEAD-box ATP-dependent RNA helicase 28 (789 aa).

The segment at 1 to 152 (MPSSFFFEDA…AEYKPEDATP (152 aa)) is disordered. Residues 13-66 (DELELIRNQEDSSEEDVKEGEAEEHEAGEDEDGEEEYEEEDDDEEEEDEKRKRD) adopt a coiled-coil conformation. Over residues 23–60 (DSSEEDVKEGEAEEHEAGEDEDGEEEYEEEDDDEEEED) the composition is skewed to acidic residues. Over residues 83-99 (GEEHARRHTTSIDEKIS) the composition is skewed to basic and acidic residues. A coiled-coil region spans residues 110 to 135 (SINEEEEEEEEEEDASDAETDKQEEY). Residues 112–127 (NEEEEEEEEEEDASDA) show a composition bias toward acidic residues. The Q motif motif lies at 167–195 (DTFMELNLSRPLLRACETLGYKKPTPIQA). A Helicase ATP-binding domain is found at 198 to 372 (IPLALTGRDL…KLSLNKPLRL (175 aa)). 211–218 (AITGSGKT) provides a ligand contact to ATP. The DEAD box motif lies at 320–323 (DEAD). In terms of domain architecture, Helicase C-terminal spans 402–546 (VLLSLCTRTF…SRVIPEQSIV (145 aa)). 2 coiled-coil regions span residues 563–591 (ISAERDERALRKAEMEFAKAENMLEHRDE) and 628–677 (SADR…EDEE). The tract at residues 611–789 (AQAEKDSAGN…FKSKARYKRR (179 aa)) is disordered. A compositionally biased stretch (basic and acidic residues) spans 628-637 (SADRAEDLKM). Positions 638–656 (KEKRKREREKNLPRKKRRK) are enriched in basic residues. Residues 665 to 678 (EDNEGEEEEEDEEG) are compositionally biased toward acidic residues. Basic and acidic residues-rich tracts occupy residues 691-701 (KKQETDKKGLT), 718-734 (RAIDSGKMERPKPDKKQ), and 743-761 (PRGEEMKDLFKSDMGEKKQ). Residues 772–789 (PRTKSKNSFKSKARYKRR) show a composition bias toward basic residues.

It belongs to the DEAD box helicase family. DDX27/DRS1 subfamily.

It catalyses the reaction ATP + H2O = ADP + phosphate + H(+). The polypeptide is DEAD-box ATP-dependent RNA helicase 28 (RH28) (Arabidopsis thaliana (Mouse-ear cress)).